A 57-amino-acid chain; its full sequence is Small hydrophobic protein (57 aa).

Topologically, residues 1–8 (MPAIQPLL) are virion surface. Residues 9-29 (YLTFLLLILLYLIITLYVWVV) form a helical membrane-spanning segment. The Intravirion portion of the chain corresponds to 30–57 (STITYKTAVRHAALYQRSLFRWSLDHSL).

The protein belongs to the rubulavirus small hydrophobic protein family. As to quaternary structure, interacts with host TNFRSF1A, RIPK1 and IRAK1; these interactions interfere with host NF-kappa-B activation at the level of receptor complexes. Interacts with host protein UBQLN4.

It is found in the virion membrane. The protein localises to the host cell membrane. Functionally, plays a role in the inhibition of the host NF-kappa-B pathway. This inhibition occurs at the receptor level, by preventing the signaling of TNFR1 as well as IL-1R and TLR3. This chain is Small hydrophobic protein (SH), found in Homo sapiens (Human).